The primary structure comprises 223 residues: MSYVTDFYQAKLKLYSYWRSSCAHRVRIALTLKGLDYEYIPVNLLKGDQSDSDFKKINPMGTVPALVDGDVVINDSFAIIMYLDDKYPEPPLLPSDYHKRAVNYQATSIVMSGIQPHQNMALFRYLEDKINAEEKTAWITNAITKGFTALEKLLVSCAGKYATGDEVYLADLFLAPQIHAAFNRFHINMEPFPTLARFYESYNELPAFQNAVPEKQPDTPSTI.

In terms of domain architecture, GST N-terminal spans 10-91 (AKLKLYSYWR…YLDDKYPEPP (82 aa)). Residues 20 to 21 (SS), 20 to 25 (SSCAHR), Gln-49, 49 to 50 (QS), 62 to 63 (TV), Val-63, 75 to 76 (DS), Gln-115, and 119 to 121 (NMA) each bind glutathione. The region spanning 96–221 (DYHKRAVNYQ…VPEKQPDTPS (126 aa)) is the GST C-terminal domain.

It belongs to the GST superfamily. Zeta family.

Its subcellular location is the cytoplasm. The protein localises to the cytosol. The catalysed reaction is RX + glutathione = an S-substituted glutathione + a halide anion + H(+). In terms of biological role, may be involved in the conjugation of reduced glutathione to a wide number of exogenous and endogenous hydrophobic electrophiles and have a detoxification role against certain herbicides. This is Glutathione S-transferase Z2 (GSTZ2) from Arabidopsis thaliana (Mouse-ear cress).